We begin with the raw amino-acid sequence, 1123 residues long: Leucine-rich repeat receptor-like protein kinase PEPR1 (1123 aa).

A signal peptide spans 1–28 (MKNLGGLFKILLLFFCLFLSTHIISVSC). Topologically, residues 29 to 769 (LNSDGLTLLS…SRKSGLSTWQ (741 aa)) are extracellular. The stretch at 31–53 (SDGLTLLSLLKHLDRVPPQVTST) is one LRR 1 repeat. 4 N-linked (GlcNAc...) asparagine glycosylation sites follow: Asn-57, Asn-81, Asn-110, and Asn-121. LRR repeat units follow at residues 74-98 (SKNVASLNFTRSRVSGQLGPEIGEL), 99-122 (KSLQILDLSTNNFSGTIPSTLGNC), 124-145 (KLATLDLSENGFSDKIPDTLDS), 146-170 (LKRLEVLYLYINFLTGELPESLFRI), 171-194 (PKLQVLYLDYNNLTGPIPQSIGDA), 196-218 (ELVELSMYANQFSGNIPESIGNS), and 219-243 (SSLQILYLHRNKLVGSLPESLNLLG). Residues Asn-182 and Asn-217 are each glycosylated (N-linked (GlcNAc...) asparagine). Asn-244, Asn-252, Asn-289, Asn-302, Asn-316, Asn-321, and Asn-337 each carry an N-linked (GlcNAc...) asparagine glycan. 20 LRR repeats span residues 245–266 (LTTLFVGNNSLQGPVRFGSPNC), 267–290 (KNLLTLDLSYNEFEGGVPPALGNC), 292–314 (SLDALVIVSGNLSGTIPSSLGML), 315–338 (KNLTILNLSENRLSGSIPAELGNC), 340–362 (SLNLLKLNDNQLVGGIPSALGKL), 363–386 (RKLESLELFENRFSGEIPIEIWKS), 388–410 (SLTQLLVYQNNLTGELPVEMTEM), 412–434 (KLKIATLFNNSFYGAIPPGLGVN), 435–458 (SSLEEVDFIGNKLTGEIPPNLCHG), 459–482 (RKLRILNLGSNLLHGTIPASIGHC), 484–505 (TIRRFILRENNLSGLLPEFSQD), 506–529 (HSLSFLDFNSNNFEGPIPGSLGSC), 530–553 (KNLSSINLSRNRFTGQIPPQLGNL), 554–577 (QNLGYMNLSRNLLEGSLPAQLSNC), 579–600 (SLERFDVGFNSLNGSVPSNFSN), 601–625 (WKGLTTLVLSENRFSGGIPQFLPEL), 626–650 (KKLSTLQIARNAFGGEIPSSIGLIE), 652–674 (LIYDLDLSGNGLTGEIPAKLGDL), 675–696 (IKLTRLNISNNNLTGSLSVLKG), and 697–721 (LTSLLHVDVSNNQFTGPIPDNLEGQ). N-linked (GlcNAc...) asparagine glycans are attached at residues Asn-398, Asn-420, and Asn-434. A glycan (N-linked (GlcNAc...) asparagine) is linked at Asn-494. Asn-531, Asn-536, Asn-560, Asn-591, and Asn-597 each carry an N-linked (GlcNAc...) asparagine glycan. Asn-681 and Asn-686 each carry an N-linked (GlcNAc...) asparagine glycan. Residue Asn-745 is glycosylated (N-linked (GlcNAc...) asparagine). The chain crosses the membrane as a helical span at residues 770–790 (IVLIAVLSSLLVLVVVLALVF). The Cytoplasmic segment spans residues 791–1123 (ICLRRRKGRP…ARSCSSDSVR (333 aa)). A Phosphothreonine modification is found at Thr-824. In terms of domain architecture, Protein kinase spans 827–1115 (LNEKYTIGRG…LLEDVKHLAR (289 aa)). ATP is bound by residues 833-841 (IGRGAHGIV) and Lys-855. Phosphotyrosine is present on residues Tyr-901 and Tyr-941. The Proton acceptor role is filled by Asp-954. A Phosphotyrosine modification is found at Tyr-995.

Belongs to the protein kinase superfamily. Ser/Thr protein kinase family. Interacts with PEP1 and BAK1. Interacts with BIK1 and PBL1. Post-translationally, N-glycosylated.

Its subcellular location is the cell membrane. The catalysed reaction is L-seryl-[protein] + ATP = O-phospho-L-seryl-[protein] + ADP + H(+). It catalyses the reaction L-threonyl-[protein] + ATP = O-phospho-L-threonyl-[protein] + ADP + H(+). In terms of biological role, acts as a receptor for PEP defense peptides. Unlike typical immune receptors, senses an endogenous elicitor that potentiates pathogen-associated molecular pattern (PAMP)-inducible plant responses. Involved in PAMP-triggered immunity (PTI) signaling. Interacts with and phosphorylates the kinase BIK1, a central rate-limiting kinase in PTI signaling. This chain is Leucine-rich repeat receptor-like protein kinase PEPR1 (PEPR1), found in Arabidopsis thaliana (Mouse-ear cress).